The sequence spans 523 residues: MFS-type transporter R5 (523 aa).

Residues 19 to 42 form a disordered region; it reads QLNEATAQRESATNNPNDSSSIDE. Positions 21–38 are enriched in polar residues; it reads NEATAQRESATNNPNDSS. 3 N-linked (GlcNAc...) asparagine glycosylation sites follow: Asn35, Asn94, and Asn143. The next 2 membrane-spanning stretches (helical) occupy residues 183 to 203 and 211 to 231; these read AYLT…GGLL and AIFW…FTFF. Asn235 and Asn250 each carry an N-linked (GlcNAc...) asparagine glycan. 6 helical membrane-spanning segments follow: residues 291–311, 319–339, 381–401, 408–428, 443–463, and 470–490; these read FIVC…ISIF, YGYS…GSIL, LTIS…YGWL, VASV…VLIA, ALGA…VAAV, and IGIG…LPAL.

This sequence belongs to the major facilitator superfamily.

The protein resides in the membrane. In terms of biological role, MFS-type transporter; part of the gene cluster that mediates the biosynthesis of squalestatin S1 (SQS1, also known as zaragozic acid A), a heavily oxidized fungal polyketide that offers potent cholesterol lowering activity by targeting squalene synthase (SS). The chain is MFS-type transporter R5 from Phoma sp. (strain ATCC 20986 / MF5453).